Consider the following 189-residue polypeptide: Marginal zone B- and B1-cell-specific protein (189 aa).

A signal peptide spans 1–22; that stretch reads MRLSLPLLLLLLGAWAIPGGLG. Disulfide bonds link cysteine 50–cysteine 178, cysteine 53–cysteine 171, and cysteine 95–cysteine 143. A Prevents secretion from ER motif is present at residues 186 to 189; that stretch reads REEL.

Belongs to the MZB1 family. As to quaternary structure, part of the ER chaperone complex, a multi-protein complex in the endoplasmic reticulum containing a large number of molecular chaperones which associates with unassembled incompletely folded immunoglobulin heavy chains. Isoform 2 interacts with CASP2 and CASP9. Interacts with HSP90B1 and PDIA3 in a calcium-dependent manner. Forms an interchain disulfide bond with IgM monomers. As to expression, widely expressed with highest levels in adult brain, small intestine and lymphoid tissues such as thymus and spleen. Expression is frequently lower in intestinal-type gastric cancer. In obese patients, more abundant in omental than in subcutaneous fat.

The protein localises to the endoplasmic reticulum lumen. It localises to the secreted. It is found in the cytoplasm. Its function is as follows. Associates with immunoglobulin M (IgM) heavy and light chains and promotes IgM assembly and secretion. May exert its effect by acting as a molecular chaperone or as an oxidoreductase as it displays a low level of oxidoreductase activity. Isoform 2 may be involved in regulation of apoptosis. Helps to diversify peripheral B-cell functions by regulating Ca(2+) stores, antibody secretion and integrin activation. In terms of biological role, acts as a hormone-regulated adipokine/pro-inflammatory cytokine that is implicated in causing chronic inflammation, affecting cellular expansion and blunting insulin response in adipocytes. May have a role in the onset of insulin resistance. This is Marginal zone B- and B1-cell-specific protein (MZB1) from Homo sapiens (Human).